Here is a 712-residue protein sequence, read N- to C-terminus: Elongation factor G (712 aa).

Residues 8–290 form the tr-type G domain; that stretch reads TRYRNIGISA…AVIEFLPSPT (283 aa). GTP contacts are provided by residues 17 to 24, 88 to 92, and 142 to 145; these read AHIDAGKT, DTPGH, and NKMD.

Belongs to the TRAFAC class translation factor GTPase superfamily. Classic translation factor GTPase family. EF-G/EF-2 subfamily.

It is found in the cytoplasm. Functionally, catalyzes the GTP-dependent ribosomal translocation step during translation elongation. During this step, the ribosome changes from the pre-translocational (PRE) to the post-translocational (POST) state as the newly formed A-site-bound peptidyl-tRNA and P-site-bound deacylated tRNA move to the P and E sites, respectively. Catalyzes the coordinated movement of the two tRNA molecules, the mRNA and conformational changes in the ribosome. This is Elongation factor G from Acinetobacter baumannii (strain SDF).